Reading from the N-terminus, the 239-residue chain is Ribosomal RNA small subunit methyltransferase G (239 aa).

S-adenosyl-L-methionine is bound by residues G77, F82, 128 to 129 (AE), and R147. The interval 216 to 239 (KKQSQTPKKFPRKPGTPNKSPIEG) is disordered.

The protein belongs to the methyltransferase superfamily. RNA methyltransferase RsmG family.

It is found in the cytoplasm. Its function is as follows. Specifically methylates the N7 position of guanine in position 535 of 16S rRNA. In Bacillus licheniformis (strain ATCC 14580 / DSM 13 / JCM 2505 / CCUG 7422 / NBRC 12200 / NCIMB 9375 / NCTC 10341 / NRRL NRS-1264 / Gibson 46), this protein is Ribosomal RNA small subunit methyltransferase G.